The sequence spans 1280 residues: Pullulanase A (1280 aa).

An N-terminal signal peptide occupies residues 1-44 (MRKTPSHTEKKMVYSIRSLKNGTGSVLIGASLVLLAMATPTISS). The disordered stretch occupies residues 42-132 (ISSDESTPTT…VTTETKAEEP (91 aa)). The span at 48–61 (TPTTNEPNNRNTTT) shows a compositional bias: low complexity. Positions 79 to 90 (DISSPGNANASL) are enriched in polar residues. Residues 115-126 (EPTTSTSPVTTE) are compositionally biased toward low complexity. Substrate contacts are provided by residues 156–158 (WTW), Trp168, Asp214, 263–265 (WYW), Trp276, Lys318, and Asn323. Residues Ser661 and Tyr663 each coordinate Ca(2+). Substrate is bound by residues 667–668 (YD) and Phe743. Asp778 (nucleophile) is an active-site residue. Glu807 acts as the Proton donor in catalysis. Trp809 contacts substrate. Positions 828, 831, and 832 each coordinate Ca(2+). Substrate-binding residues include Asp839, Arg842, and Tyr849. Ca(2+)-binding residues include Asp882 and Asp886. Substrate-binding positions include Asn896, Lys969, and 989-991 (DSY). Asp992 lines the Ca(2+) pocket. Positions 1140 to 1248 (VSQNGTSHES…TPDKQAELPN (109 aa)) are disordered. Basic and acidic residues predominate over residues 1149-1196 (STAEEKPDSTPSKPEHQNEASHPAHQDPAPEARPDSTKPDAKVADAEN). Positions 1205-1218 (SQAEQPAQEAQASS) are enriched in low complexity. The short motif at 1246-1250 (LPNTG) is the LPXTG sorting signal element. Thr1249 bears the Pentaglycyl murein peptidoglycan amidated threonine mark. A propeptide spans 1250-1280 (GIKNENKLLFAGISLLALLGLGFLLKNKKEN) (removed by sortase).

The protein belongs to the glycosyl hydrolase 13 family.

The protein localises to the secreted. It is found in the cell wall. It localises to the cell surface. The catalysed reaction is Hydrolysis of (1-&gt;6)-alpha-D-glucosidic linkages in pullulan, amylopectin and glycogen, and in the alpha- and beta-limit dextrins of amylopectin and glycogen.. Inhibited by 4-O-alpha-D-glucopyranosylmoranoline (G1M). In terms of biological role, virulence factor. Involved in the degradation of glycogen of the mammalian host cells. Hydrolyzes the alpha-1,6-branchpoints of glycogen. Hydrolyzes pullulan. Does not hydrolyze dextran. Binds to mouse lung alveolar type II cells that are rich in glycogen stores. Is an alpha-glucan-specific carbohydrate-binding protein, which binds to amylose (pure alpha-(1,4)-linked glucose), amylopectin (alpha-(1,4)-linked glucose with alpha-(1,6) branch points), pullulan (linear polymer of mixed alpha-(1,4)- and alpha-(1,6)-linked glucose) and glycogen (similar to amylopectin with more frequent alpha-(1,6) branch points) in vitro. Does not bind to dextran (a linear polymer of alpha-(1,6)-linked glucose). The polypeptide is Pullulanase A (Streptococcus pneumoniae serotype 4 (strain ATCC BAA-334 / TIGR4)).